Consider the following 151-residue polypeptide: Ribonuclease H (151 aa).

Positions 1 to 141 constitute an RNase H type-1 domain; the sequence is MQEVTVYSDG…ADALANKGVE (141 aa). 4 residues coordinate Mg(2+): D9, E47, D69, and D133.

This sequence belongs to the RNase H family. As to quaternary structure, monomer. Mg(2+) is required as a cofactor.

The protein localises to the cytoplasm. The enzyme catalyses Endonucleolytic cleavage to 5'-phosphomonoester.. Its function is as follows. Endonuclease that specifically degrades the RNA of RNA-DNA hybrids. The sequence is that of Ribonuclease H from Ralstonia nicotianae (strain ATCC BAA-1114 / GMI1000) (Ralstonia solanacearum).